We begin with the raw amino-acid sequence, 323 residues long: tRNA-modifying protein YgfZ (323 aa).

Residues Trp-29 and Trp-182 each coordinate folate.

Belongs to the tRNA-modifying YgfZ family.

Its subcellular location is the cytoplasm. In terms of biological role, folate-binding protein involved in regulating the level of ATP-DnaA and in the modification of some tRNAs. It is probably a key factor in regulatory networks that act via tRNA modification, such as initiation of chromosomal replication. The sequence is that of tRNA-modifying protein YgfZ from Vibrio atlanticus (strain LGP32) (Vibrio splendidus (strain Mel32)).